A 347-amino-acid chain; its full sequence is 2-hydroxyacid dehydrogenase A (347 aa).

NAD(+)-binding positions include 157-158 (RI), Asp177, 234-236 (TSR), and Asp260. Residue Arg236 is part of the active site. The active site involves Glu265.

This sequence belongs to the D-isomer specific 2-hydroxyacid dehydrogenase family.

The enzyme catalyses a (2R)-2-hydroxycarboxylate + NADP(+) = a 2-oxocarboxylate + NADPH + H(+). Its function is as follows. 2-hydroxyacid dehydrogenase that is capable to reduce pyruvate, hydroxypyruvate and glyoxylate in a NADPH- or NADH-dependent manner. In contrast to 2-HadhD/morA, does not recognize 4-methyl-2-oxopentanoate (MOA) as a substrate. The polypeptide is 2-hydroxyacid dehydrogenase A (Aspergillus oryzae (strain ATCC 42149 / RIB 40) (Yellow koji mold)).